The chain runs to 296 residues: Formamidopyrimidine-DNA glycosylase (296 aa).

The active-site Schiff-base intermediate with DNA is Pro2. The active-site Proton donor is Glu3. The active-site Proton donor; for beta-elimination activity is the Lys58. The DNA site is built by His104, Arg126, and Lys169. An FPG-type zinc finger spans residues Ser260–Lys296. The active-site Proton donor; for delta-elimination activity is the Arg286.

It belongs to the FPG family. Monomer. It depends on Zn(2+) as a cofactor.

The enzyme catalyses Hydrolysis of DNA containing ring-opened 7-methylguanine residues, releasing 2,6-diamino-4-hydroxy-5-(N-methyl)formamidopyrimidine.. The catalysed reaction is 2'-deoxyribonucleotide-(2'-deoxyribose 5'-phosphate)-2'-deoxyribonucleotide-DNA = a 3'-end 2'-deoxyribonucleotide-(2,3-dehydro-2,3-deoxyribose 5'-phosphate)-DNA + a 5'-end 5'-phospho-2'-deoxyribonucleoside-DNA + H(+). Involved in base excision repair of DNA damaged by oxidation or by mutagenic agents. Acts as a DNA glycosylase that recognizes and removes damaged bases. Has a preference for oxidized purines, such as 7,8-dihydro-8-oxoguanine (8-oxoG). Has AP (apurinic/apyrimidinic) lyase activity and introduces nicks in the DNA strand. Cleaves the DNA backbone by beta-delta elimination to generate a single-strand break at the site of the removed base with both 3'- and 5'-phosphates. The chain is Formamidopyrimidine-DNA glycosylase from Sinorhizobium fredii (strain NBRC 101917 / NGR234).